The chain runs to 144 residues: Actin-associated protein FAM107A (144 aa).

The stretch at 67–94 forms a coiled coil; it reads LQRVLEHRRRNQLIKKKKEELEAKRLQC. The Nuclear localization signal signature appears at 74–84; the sequence is RRRNQLIKKKK. Residues 105-124 are disordered; the sequence is QRLNQLEKPPEKEEDHAPEF. The segment covering 112-124 has biased composition (basic and acidic residues); sequence KPPEKEEDHAPEF.

This sequence belongs to the FAM107 family. In terms of assembly, interacts with ACTB. Interacts with COMMD1; this interaction stabilizes COMMD1 in the nucleus. Interacts with MAP1A. Interacts with PRDX1. Interacts with F-actin.

Its subcellular location is the nucleus. The protein localises to the cytoplasm. It is found in the cytoskeleton. It localises to the stress fiber. The protein resides in the cell junction. Its subcellular location is the focal adhesion. The protein localises to the cell projection. It is found in the ruffle membrane. It localises to the synapse. Stress-inducible actin-binding protein that plays a role in synaptic and cognitive functions by modulating actin filamentous (F-actin) dynamics. Mediates polymerization of globular actin to F-actin. Also binds to, stabilizes and bundles F-actin. Involved in synaptic function by regulating neurite outgrowth in an actin-dependent manner and for the acquisition of hippocampus-dependent cognitive function, such as learning and long-term memory. Plays a role in the actin and microtubule cytoskeleton organization; negatively regulates focal adhesion (FA) assembly promoting malignant glial cell migration in an actin-, microtubule- and MAP1A-dependent manner. Also involved in neuroblastoma G1/S phase cell cycle progression and cell proliferation inhibition by stimulating ubiquitination of NF-kappa-B subunit RELA and NF-kappa-B degradation in a COMMD1- and actin-dependent manner. May play a role in tumor development. The polypeptide is Actin-associated protein FAM107A (FAM107A) (Pan troglodytes (Chimpanzee)).